A 155-amino-acid polypeptide reads, in one-letter code: Endoribonuclease YbeY (155 aa).

His114, His118, and His124 together coordinate Zn(2+).

The protein belongs to the endoribonuclease YbeY family. Zn(2+) serves as cofactor.

It is found in the cytoplasm. Single strand-specific metallo-endoribonuclease involved in late-stage 70S ribosome quality control and in maturation of the 3' terminus of the 16S rRNA. The protein is Endoribonuclease YbeY of Photorhabdus laumondii subsp. laumondii (strain DSM 15139 / CIP 105565 / TT01) (Photorhabdus luminescens subsp. laumondii).